The primary structure comprises 348 residues: MADIYRFPKFSYEDNGTVEPLPLRTGSDKKAIPYIRIIKVGDPPKHGVRYLDLLLLGFFETPKQTTNLGSVSDLTEPTSYSICGSGSLPIGVAKYYGTDQELLKACTDLRITVRRTVRAGEMIVYMVDSIGAPLLPWSGRLRQGMIFNANKVALAPQCLPVDKDIRFRVVFVNGTSLGAITIAKIPKTLADLALPNSISVNLLVTLKTGISTEQKGVLPVLDDQGEKKLNFMVHLGLIRRKVGKIYSVEYCKSKIERMRLIFSLGLIGGISFHVQVTGTLSKTFMSQLAWKRAVCFPLMDVNPHMNLVIWAASVEITGVDAVFQPAIPRDFRYYPNVVAKNIGRIRKL.

A YLDL motif motif is present at residues 50–53; it reads YLDL. Ser-70 carries the phosphoserine; by host modification.

The protein belongs to the morbillivirus/respirovirus/rubulavirus M protein family. As to quaternary structure, homomultimer. Binds to the cytoplasmic regions of F and HN proteins. Interacts with nucleocapsid. Interacts with human alpha-tubulin and beta-tubulin. Interacts with host ANP32B. Post-translationally, a large portion is phosphorylated in the cytoplasm, but not in virion. However, this phosphorylation is not essential for virus replication.

The protein resides in the virion. It is found in the host cytoplasm. Its subcellular location is the host cell membrane. Functionally, acts as a negative regulator for transcription and replication by sticking to the nucleocapsid. This effect might be regulated by the cytoplasmic interaction with tubulin that dissociates the M protein from the nucleocapsid. Plays a crucial role in virion assembly and budding. Forms a shell at the inner face of the plasma membrane and concentrates the HN and F glycoproteins. In Sendai virus (strain Harris) (SeV), this protein is Matrix protein (M).